Consider the following 147-residue polypeptide: D-aminoacyl-tRNA deacylase (147 aa).

The short motif at 137 to 138 is the Gly-cisPro motif, important for rejection of L-amino acids element; that stretch reads GP.

The protein belongs to the DTD family. As to quaternary structure, homodimer.

The protein resides in the cytoplasm. The catalysed reaction is glycyl-tRNA(Ala) + H2O = tRNA(Ala) + glycine + H(+). It catalyses the reaction a D-aminoacyl-tRNA + H2O = a tRNA + a D-alpha-amino acid + H(+). In terms of biological role, an aminoacyl-tRNA editing enzyme that deacylates mischarged D-aminoacyl-tRNAs. Also deacylates mischarged glycyl-tRNA(Ala), protecting cells against glycine mischarging by AlaRS. Acts via tRNA-based rather than protein-based catalysis; rejects L-amino acids rather than detecting D-amino acids in the active site. By recycling D-aminoacyl-tRNA to D-amino acids and free tRNA molecules, this enzyme counteracts the toxicity associated with the formation of D-aminoacyl-tRNA entities in vivo and helps enforce protein L-homochirality. This is D-aminoacyl-tRNA deacylase from Acinetobacter baumannii (strain AYE).